The chain runs to 492 residues: KAT8 regulatory NSL complex subunit 2 (492 aa).

Residue Lys78 forms a Glycyl lysine isopeptide (Lys-Gly) (interchain with G-Cter in SUMO2) linkage. Residues 127 to 182 (LGSQTPESSRSEASRILDEDSWSDGEQEPITVDQTWRGDPDSEADSIDSDQEDPLK) are disordered. Thr131 bears the Phosphothreonine mark. Positions 135–144 (SRSEASRILD) are enriched in basic and acidic residues. Residues Ser147, Ser149, Ser168, Ser172, and Ser175 each carry the phosphoserine modification. Residues 167 to 178 (DSEADSIDSDQE) are compositionally biased toward acidic residues. The required for interaction with other NSL complex members stretch occupies residues 308 to 364 (DVRCSNQSLPMTRHCLTHICQDTNQVLFKCCQGSEEVPCNKPVPVSLSEDPCCPLHF). The disordered stretch occupies residues 455–492 (AGDGCRSQGSRNSEKGSAPLSQSGLATANGKPEPTSIS).

Component of the NSL complex at least composed of KAT8/MOF, KANSL1, KANSL2, KANSL3, MCRS1, PHF20, OGT1/OGT, WDR5 and HCFC1.

The protein resides in the nucleus. Its subcellular location is the mitochondrion. In terms of biological role, non-catalytic component of the NSL histone acetyltransferase complex, a multiprotein complex that mediates histone H4 acetylation at 'Lys-5'- and 'Lys-8' (H4K5ac and H4K8ac) at transcription start sites and promotes transcription initiation. Required for NSL complex stability and for transcription of intraciliary transport genes in both ciliated and non-ciliated cells by regulating histone H4 acetylation at 'Lys-5'- and 'Lys-12' (H4K5ac and H4K12ac). This is necessary for cilium assembly in ciliated cells and for organization of the microtubule cytoskeleton in non-ciliated cells. Required within the NSL complex to maintain nuclear architecture stability by promoting KAT8-mediated acetylation of lamin LMNA. This Pongo abelii (Sumatran orangutan) protein is KAT8 regulatory NSL complex subunit 2 (KANSL2).